An 843-amino-acid polypeptide reads, in one-letter code: Protein P (843 aa).

Residues 1-177 (MPLSYPHFRK…FCGSQYSWEQ (177 aa)) are terminal protein domain (TP). A spacer region spans residues 178-346 (ELQHGSTSLN…YCLSHIINLL (169 aa)). 2 disordered regions span residues 228 to 255 (KQGQ…RWPA) and 284 to 314 (EANP…SVGS). The segment covering 239–249 (RSGRLRSRVHT) has biased composition (basic residues). Residues 347–690 (EDWGPCYEHG…YMNLYPVARQ (344 aa)) form a polymerase/reverse transcriptase domain (RT) region. The Reverse transcriptase domain maps to 357–600 (EHHIRTPRTP…YNLHFMGYVI (244 aa)). Residues Asp-429, Asp-551, and Asp-552 each coordinate Mg(2+).

The protein belongs to the hepadnaviridae P protein family.

The catalysed reaction is DNA(n) + a 2'-deoxyribonucleoside 5'-triphosphate = DNA(n+1) + diphosphate. It catalyses the reaction Endonucleolytic cleavage to 5'-phosphomonoester.. With respect to regulation, activated by host HSP70 and HSP40 in vitro to be able to bind the epsilon loop of the pgRNA. Because deletion of the RNase H region renders the protein partly chaperone-independent, the chaperones may be needed indirectly to relieve occlusion of the RNA-binding site by this domain. Inhibited by several reverse-transcriptase inhibitors: Lamivudine, Adefovir and Entecavir. In terms of biological role, multifunctional enzyme that converts the viral RNA genome into dsDNA in viral cytoplasmic capsids. This enzyme displays a DNA polymerase activity that can copy either DNA or RNA templates, and a ribonuclease H (RNase H) activity that cleaves the RNA strand of RNA-DNA heteroduplexes in a partially processive 3'- to 5'-endonucleasic mode. Neo-synthesized pregenomic RNA (pgRNA) are encapsidated together with the P protein, and reverse-transcribed inside the nucleocapsid. Initiation of reverse-transcription occurs first by binding the epsilon loop on the pgRNA genome, and is initiated by protein priming, thereby the 5'-end of (-)DNA is covalently linked to P protein. Partial (+)DNA is synthesized from the (-)DNA template and generates the relaxed circular DNA (RC-DNA) genome. After budding and infection, the RC-DNA migrates in the nucleus, and is converted into a plasmid-like covalently closed circular DNA (cccDNA). The activity of P protein does not seem to be necessary for cccDNA generation, and is presumably released from (+)DNA by host nuclear DNA repair machinery. This chain is Protein P, found in Hepatitis B virus genotype F2 subtype adw4q (isolate Senegal/9203) (HBV-F).